Reading from the N-terminus, the 180-residue chain is Centromere protein M (180 aa).

It is found in the nucleus. The protein resides in the chromosome. Its subcellular location is the centromere. In terms of biological role, probable component of a centromeric complex involved in assembly of kinetochore proteins, mitotic progression and chromosome segregation. The sequence is that of Centromere protein M (cenpm) from Xenopus laevis (African clawed frog).